A 237-amino-acid polypeptide reads, in one-letter code: Ribosomal RNA small subunit methyltransferase G (237 aa).

S-adenosyl-L-methionine-binding positions include Gly-78, Phe-83, 129 to 130 (AE), and Arg-148.

This sequence belongs to the methyltransferase superfamily. RNA methyltransferase RsmG family.

The protein localises to the cytoplasm. Its function is as follows. Specifically methylates the N7 position of a guanine in 16S rRNA. The polypeptide is Ribosomal RNA small subunit methyltransferase G (Streptococcus pyogenes serotype M2 (strain MGAS10270)).